The sequence spans 141 residues: Large ribosomal subunit protein uL13 (141 aa).

It belongs to the universal ribosomal protein uL13 family. As to quaternary structure, part of the 50S ribosomal subunit.

This protein is one of the early assembly proteins of the 50S ribosomal subunit, although it is not seen to bind rRNA by itself. It is important during the early stages of 50S assembly. In Helicobacter pylori (strain G27), this protein is Large ribosomal subunit protein uL13.